We begin with the raw amino-acid sequence, 273 residues long: Ribosomal RNA small subunit methyltransferase A (273 aa).

The S-adenosyl-L-methionine site is built by Asn18, Leu20, Gly45, Glu66, Asp91, and Asn113.

This sequence belongs to the class I-like SAM-binding methyltransferase superfamily. rRNA adenine N(6)-methyltransferase family. RsmA subfamily.

Its subcellular location is the cytoplasm. It carries out the reaction adenosine(1518)/adenosine(1519) in 16S rRNA + 4 S-adenosyl-L-methionine = N(6)-dimethyladenosine(1518)/N(6)-dimethyladenosine(1519) in 16S rRNA + 4 S-adenosyl-L-homocysteine + 4 H(+). Functionally, specifically dimethylates two adjacent adenosines (A1518 and A1519) in the loop of a conserved hairpin near the 3'-end of 16S rRNA in the 30S particle. May play a critical role in biogenesis of 30S subunits. This Shigella boydii serotype 18 (strain CDC 3083-94 / BS512) protein is Ribosomal RNA small subunit methyltransferase A.